We begin with the raw amino-acid sequence, 487 residues long: GTPase Der (487 aa).

2 EngA-type G domains span residues 3-167 and 203-378; these read FTLA…EGFA and LQIA…DIWN. GTP is bound by residues 9-16, 56-60, 119-122, 209-216, 256-260, and 321-324; these read GRPNVGKS, DTAGL, NKAE, GRPNAGKS, DTAGM, and NKWD. The KH-like domain occupies 379–463; sequence RRITTARLNS…PIRLTMRGQG (85 aa). The disordered stretch occupies residues 459–487; sequence MRGQGDKNPFKERKFRTPSRLRKHLGKKG. Residues 471 to 487 are compositionally biased toward basic residues; sequence RKFRTPSRLRKHLGKKG.

Belongs to the TRAFAC class TrmE-Era-EngA-EngB-Septin-like GTPase superfamily. EngA (Der) GTPase family. Associates with the 50S ribosomal subunit.

Functionally, GTPase that plays an essential role in the late steps of ribosome biogenesis. This chain is GTPase Der, found in Cereibacter sphaeroides (strain ATCC 17025 / ATH 2.4.3) (Rhodobacter sphaeroides).